Here is a 67-residue protein sequence, read N- to C-terminus: DNA gyrase inhibitor YacG (67 aa).

4 residues coordinate Zn(2+): C9, C12, C28, and C32. A disordered region spans residues 48-67 (PVSPDAEDELFSEELPPRAH).

The protein belongs to the DNA gyrase inhibitor YacG family. In terms of assembly, interacts with GyrB. It depends on Zn(2+) as a cofactor.

Its function is as follows. Inhibits all the catalytic activities of DNA gyrase by preventing its interaction with DNA. Acts by binding directly to the C-terminal domain of GyrB, which probably disrupts DNA binding by the gyrase. The chain is DNA gyrase inhibitor YacG from Pseudomonas fluorescens (strain ATCC BAA-477 / NRRL B-23932 / Pf-5).